The chain runs to 23 residues: Septenin 2c (23 aa).

In terms of tissue distribution, expressed in skin granular glands.

Its subcellular location is the secreted. Functionally, may act as an antimicrobial peptide. This chain is Septenin 2c, found in Osteopilus septentrionalis (Cuban treefrog).